A 170-amino-acid polypeptide reads, in one-letter code: Large ribosomal subunit protein uL10 (170 aa).

The protein belongs to the universal ribosomal protein uL10 family. As to quaternary structure, part of the ribosomal stalk of the 50S ribosomal subunit. The N-terminus interacts with L11 and the large rRNA to form the base of the stalk. The C-terminus forms an elongated spine to which L12 dimers bind in a sequential fashion forming a multimeric L10(L12)X complex.

In terms of biological role, forms part of the ribosomal stalk, playing a central role in the interaction of the ribosome with GTP-bound translation factors. The polypeptide is Large ribosomal subunit protein uL10 (Lactobacillus acidophilus (strain ATCC 700396 / NCK56 / N2 / NCFM)).